Reading from the N-terminus, the 232-residue chain is Glutathione S-transferase U10 (232 aa).

The GST N-terminal domain occupies 6–85 (SKVILHGTWI…YIDETWTNSP (80 aa)). Glutathione is bound by residues 16-17 (ST), 42-43 (NK), 56-57 (KI), and 69-70 (ES). One can recognise a GST C-terminal domain in the interval 91–226 (DPYERAQVRF…FIQKYRQKCL (136 aa)).

Belongs to the GST superfamily. Tau family.

The protein localises to the cytoplasm. Its subcellular location is the cytosol. It catalyses the reaction RX + glutathione = an S-substituted glutathione + a halide anion + H(+). May be involved in the conjugation of reduced glutathione to a wide number of exogenous and endogenous hydrophobic electrophiles and have a detoxification role against certain herbicides. This Arabidopsis thaliana (Mouse-ear cress) protein is Glutathione S-transferase U10 (GSTU10).